A 199-amino-acid polypeptide reads, in one-letter code: MARYTGPAWKLSRRLGISLSETGKELAKRPYAPGQHGNGRKKISEYDLQLQAKQALRHMYGVNEKQFRRIFNDAGKMPGIHGENFMFLLESRLDNLVYRFGLARTRRGARQLVNHGHITVDGSRVDIASYRVKPGQVIAVREKSKNVKAIAEALEVAPATKDFVSFDAEKLEGTFVRLPERAELNDQIKEQLIVEYYSR.

The region spanning 91 to 151 is the S4 RNA-binding domain; it reads SRLDNLVYRF…EKSKNVKAIA (61 aa).

It belongs to the universal ribosomal protein uS4 family. In terms of assembly, part of the 30S ribosomal subunit. Contacts protein S5. The interaction surface between S4 and S5 is involved in control of translational fidelity.

In terms of biological role, one of the primary rRNA binding proteins, it binds directly to 16S rRNA where it nucleates assembly of the body of the 30S subunit. Functionally, with S5 and S12 plays an important role in translational accuracy. This chain is Small ribosomal subunit protein uS4, found in Exiguobacterium sp. (strain ATCC BAA-1283 / AT1b).